We begin with the raw amino-acid sequence, 156 residues long: Small ribosomal subunit protein uS7 (156 aa).

The protein belongs to the universal ribosomal protein uS7 family. Part of the 30S ribosomal subunit. Contacts proteins S9 and S11.

In terms of biological role, one of the primary rRNA binding proteins, it binds directly to 16S rRNA where it nucleates assembly of the head domain of the 30S subunit. Is located at the subunit interface close to the decoding center, probably blocks exit of the E-site tRNA. The polypeptide is Small ribosomal subunit protein uS7 (Hyphomonas neptunium (strain ATCC 15444)).